Here is a 957-residue protein sequence, read N- to C-terminus: Leucine--tRNA ligase (957 aa).

A 'HIGH' region motif is present at residues Pro-70 to His-81. Residues Lys-727–Ser-731 carry the 'KMSKS' region motif. ATP is bound at residue Lys-730.

This sequence belongs to the class-I aminoacyl-tRNA synthetase family.

It is found in the cytoplasm. It carries out the reaction tRNA(Leu) + L-leucine + ATP = L-leucyl-tRNA(Leu) + AMP + diphosphate. The sequence is that of Leucine--tRNA ligase from Corynebacterium efficiens (strain DSM 44549 / YS-314 / AJ 12310 / JCM 11189 / NBRC 100395).